The primary structure comprises 314 residues: Putative thiamine biosynthesis protein HI_0357 (314 aa).

The protein belongs to the NMT1/THI5 family.

In terms of biological role, probably involved in thiamine biosynthesis. The polypeptide is Putative thiamine biosynthesis protein HI_0357 (Haemophilus influenzae (strain ATCC 51907 / DSM 11121 / KW20 / Rd)).